Here is a 198-residue protein sequence, read N- to C-terminus: MSSPYILVLYYSRHGATAEMARQIARGVEQGGFEARVRTVPAVSTECEAVAPDIPAEGALYATLEDLKNCAGLALGSPTRFGNMASPLKYFLDGTSSLWLTGSLVGKPAAVFTSTASLHGGQETTQLSMLLPLLHHGMLVLGIPYSEPALLETRGGGTPYGASHFAGADGKRSLDEHELTLCRALGKRLAETAGKLGS.

In terms of domain architecture, Flavodoxin-like spans 6–190; that stretch reads ILVLYYSRHG…LCRALGKRLA (185 aa). Residues 12–17, 79–81, 114–120, and His-135 each bind FMN; these read SRHGAT, TRF, and STASLHG.

Belongs to the WrbA family. In terms of assembly, homodimer. It depends on FMN as a cofactor.

It catalyses the reaction a quinone + NADH + H(+) = a quinol + NAD(+). The enzyme catalyses a quinone + NADPH + H(+) = a quinol + NADP(+). The protein is NAD(P)H dehydrogenase (quinone) of Pseudomonas aeruginosa (strain ATCC 15692 / DSM 22644 / CIP 104116 / JCM 14847 / LMG 12228 / 1C / PRS 101 / PAO1).